A 725-amino-acid chain; its full sequence is Threonine--tRNA ligase, cytoplasmic (725 aa).

The region spanning 80–142 (EPIQITLPDG…EGNAKLELLK (63 aa)) is the TGS domain.

This sequence belongs to the class-II aminoacyl-tRNA synthetase family.

Its subcellular location is the cytoplasm. It carries out the reaction tRNA(Thr) + L-threonine + ATP = L-threonyl-tRNA(Thr) + AMP + diphosphate + H(+). The chain is Threonine--tRNA ligase, cytoplasmic from Caenorhabditis elegans.